The chain runs to 64 residues: MLAYQARVKEEYDQLMLKINALSKFLESAKFLTVSAVEQELLLSQFISMKSYAECLEKRIAQFK.

This is an uncharacterized protein from Enterobacteria phage T4 (Bacteriophage T4).